A 370-amino-acid chain; its full sequence is mRNA cap guanine-N(7) methyltransferase 1 (370 aa).

The span at 1–11 shows a compositional bias: low complexity; the sequence is MKRGFSDSPSS. The interval 1-34 is disordered; it reads MKRGFSDSPSSSAPPPSSRFKSNPEGDSQFLEDE. Positions 61–341 constitute an mRNA cap 0 methyltransferase domain; the sequence is SPIIHLKKLN…LYLSFVLRKR (281 aa). 70 to 71 contacts mRNA; that stretch reads NN. Residues Lys-74, Ala-92, Asp-114, 150 to 151, and 172 to 174 each bind S-adenosyl-L-methionine; these read DC and QFA.

This sequence belongs to the class I-like SAM-binding methyltransferase superfamily. mRNA cap 0 methyltransferase family.

It is found in the nucleus. The enzyme catalyses a 5'-end (5'-triphosphoguanosine)-ribonucleoside in mRNA + S-adenosyl-L-methionine = a 5'-end (N(7)-methyl 5'-triphosphoguanosine)-ribonucleoside in mRNA + S-adenosyl-L-homocysteine. MRNA-capping methyltransferase that methylates the N7 position of the added guanosine to the 5'-cap structure of mRNAs. Binds RNA containing 5'-terminal GpppC. This chain is mRNA cap guanine-N(7) methyltransferase 1, found in Arabidopsis thaliana (Mouse-ear cress).